The following is a 459-amino-acid chain: U1 small nuclear ribonucleoprotein 70 kDa (459 aa).

Residues 99-178 form the RRM domain; that stretch reads KTIFVSRISY…RRIVVDIERG (80 aa). A disordered region spans residues 185–459; the sequence is KPRKFGGGLG…YSMISNENGF (275 aa). A compositionally biased stretch (basic and acidic residues) spans 211–241; it reads EMSESREKEKEREKEKEKEKERMEKMKKRDG. Positions 242–254 are enriched in low complexity; sequence GLSSNGNRSNGIS. Over residues 263–408 the composition is skewed to basic and acidic residues; it reads DRGDRGDRDR…IDERRRDQRD (146 aa). Residues 426 to 440 are compositionally biased toward basic residues; that stretch reads QHHHHQQNHQSHHNQ.

The protein localises to the nucleus. Its function is as follows. Mediates the splicing of pre-mRNA by binding to the stem loop I region of U1-snRNA. The chain is U1 small nuclear ribonucleoprotein 70 kDa (snrnp70) from Dictyostelium discoideum (Social amoeba).